A 296-amino-acid chain; its full sequence is ADP-dependent (S)-NAD(P)H-hydrate dehydratase (296 aa).

The 275-residue stretch at 18–292 (TALRFPHVFK…PAARWLRNRI (275 aa)) folds into the YjeF C-terminal domain. Positions 53, 113, and 165 each coordinate (6S)-NADPHX. AMP is bound by residues 202–206 (KGHKT) and G231. D232 serves as a coordination point for (6S)-NADPHX.

This sequence belongs to the NnrD/CARKD family. In terms of assembly, homotetramer. Mg(2+) is required as a cofactor.

The catalysed reaction is (6S)-NADHX + ADP = AMP + phosphate + NADH + H(+). It carries out the reaction (6S)-NADPHX + ADP = AMP + phosphate + NADPH + H(+). Catalyzes the dehydration of the S-form of NAD(P)HX at the expense of ADP, which is converted to AMP. Together with NAD(P)HX epimerase, which catalyzes the epimerization of the S- and R-forms, the enzyme allows the repair of both epimers of NAD(P)HX, a damaged form of NAD(P)H that is a result of enzymatic or heat-dependent hydration. The chain is ADP-dependent (S)-NAD(P)H-hydrate dehydratase from Neisseria meningitidis serogroup B (strain ATCC BAA-335 / MC58).